The sequence spans 473 residues: Ribulose bisphosphate carboxylase large chain (473 aa).

Substrate is bound by residues N116 and T166. K168 (proton acceptor) is an active-site residue. Residue K170 coordinates substrate. 3 residues coordinate Mg(2+): K194, D196, and E197. K194 is subject to N6-carboxylysine. The active-site Proton acceptor is H287. R288, H320, and S372 together coordinate substrate.

This sequence belongs to the RuBisCO large chain family. Type I subfamily. As to quaternary structure, heterohexadecamer of 8 large chains and 8 small chains. The cofactor is Mg(2+).

It carries out the reaction 2 (2R)-3-phosphoglycerate + 2 H(+) = D-ribulose 1,5-bisphosphate + CO2 + H2O. It catalyses the reaction D-ribulose 1,5-bisphosphate + O2 = 2-phosphoglycolate + (2R)-3-phosphoglycerate + 2 H(+). RuBisCO catalyzes two reactions: the carboxylation of D-ribulose 1,5-bisphosphate, the primary event in carbon dioxide fixation, as well as the oxidative fragmentation of the pentose substrate. Both reactions occur simultaneously and in competition at the same active site. This Nitrobacter winogradskyi (Nitrobacter agilis) protein is Ribulose bisphosphate carboxylase large chain.